The chain runs to 839 residues: MAKAAKAAGSSARFRQRKISVKQTLAVLKQSDIPDLEEEQQRELQQIETGVEKGEEEEHHLQAAINSSIAQSTGAKVEKIYIPTPDASQVWKEYDRFYSSSFHEPASYIRTSVTVEETSGCLYNMDDEDAEFLKTCKPPISEDDFEEVMHRFEVTISEKQPFVSIDVSNLLSFEEMAQHIEDGIRQVQEDPTSPEYILAQLQSSLGITVNGTKGKNEGKAFLATFKKIGAVIYPHWRARKVERKGQSIVPHLKFEDHEKDDSDPYVCFRRRELRQVRKTRRTDVLSIERLRRMQAEMETAKQLVEMVATREFTRKAALKAEWDVFEDRCAIKTLKRELGIKGEDEDLVAQKKRKVEPKKEEKAEKASTPVRGGKAAGSAASAQAAAAQAAAAGSGSPSVSSTHVPPNVSIPPSKIPNMDLITIAQVVRDKDEAIAKAVREKLRLRADADRDWHNLTNSGYIPYCEYLNAEVSSSGEPPVPQYSSINEMAYFEKHNASHRYTTKSDFNKDLASMVGNKPFADAQVYGAIVGDDGELRLSDATSTSSPVDRVIPRSSFMSMRKRVGRGGRMWMDRRGLQRNTVLKPSSLAKNSLDDTAESEADEVAMERLADRQKYDRETEPTRQMSSYDKDPSQLNGISSDTQSIRFGSMLLSKAYENYREVFQQRQQQLMMLQQQILQQQQQQQMRNRQQSHPPGDPGAGLGGGQGAGGGAGGSRNNSPAPGTNGPQSKMHNAAPMGYNKQGMTPSQHQQYQQMQQQQQQQQQQQQQRKMGVAPMNAASAAAAMAAQPRRSSGSPDGQRFNGLPNGGAMANGVLPNGMSQRMMPGGDMKQKSELAKVDA.

4 disordered regions span residues 350–379, 393–415, 608–640, and 679–839; these read QKKR…AGSA, GSGS…PSKI, LADR…ISSD, and QQQQ…KVDA. The segment covering 608 to 620 has biased composition (basic and acidic residues); it reads LADRQKYDRETEP. Residues 621–640 show a composition bias toward polar residues; it reads TRQMSSYDKDPSQLNGISSD. The segment covering 679–690 has biased composition (low complexity); that stretch reads QQQQQQMRNRQQ. Residues 697–713 show a composition bias toward gly residues; that stretch reads PGAGLGGGQGAGGGAGG. The segment covering 714–730 has biased composition (polar residues); the sequence is SRNNSPAPGTNGPQSKM. Low complexity predominate over residues 747–786; sequence QHQQYQQMQQQQQQQQQQQQQRKMGVAPMNAASAAAAMAA. Over residues 828-839 the composition is skewed to basic and acidic residues; the sequence is MKQKSELAKVDA.

It belongs to the enhancer of polycomb family. In terms of assembly, component of the NuA4 histone acetyltransferase complex.

Its subcellular location is the nucleus. In terms of biological role, component of the NuA4 histone acetyltransferase complex which is involved in transcriptional activation of selected genes principally by acetylation of nucleosomal histone H4 and H2A. The NuA4 complex is also involved in DNA repair. Involved in gene silencing by neighboring heterochromatin, blockage of the silencing spreading along the chromosome, and required for cell cycle progression through G2/M. The polypeptide is Enhancer of polycomb-like protein 1 (EPL1) (Yarrowia lipolytica (strain CLIB 122 / E 150) (Yeast)).